The primary structure comprises 1114 residues: Kinesin-like protein KIN-12F (1114 aa).

The tract at residues 1-84 (MADNRIAGSL…RSQVSASRPR (84 aa)) is disordered. 2 stretches are compositionally biased toward polar residues: residues 10–39 (LPTS…SNPD) and 48–80 (PNIH…QVSA). The Kinesin motor domain maps to 104-436 (HVKVVVRIKP…LRFGERAKAM (333 aa)). 175-182 (GQNGSGKT) contacts ATP. 3 coiled-coil regions span residues 761–791 (QQEL…QTED), 872–942 (ARSF…LRRA), and 1038–1081 (EVLV…HKLE). Residues 1092-1114 (NTLPESALQPLHQRNSAIEEEGM) form a disordered region.

It belongs to the TRAFAC class myosin-kinesin ATPase superfamily. Kinesin family. KIN-12 subfamily.

In Arabidopsis thaliana (Mouse-ear cress), this protein is Kinesin-like protein KIN-12F.